The primary structure comprises 122 residues: Large ribosomal subunit protein bL19c (122 aa).

Belongs to the bacterial ribosomal protein bL19 family.

The protein resides in the plastid. The protein localises to the chloroplast. The protein is Large ribosomal subunit protein bL19c of Gracilaria tenuistipitata var. liui (Red alga).